Consider the following 342-residue polypeptide: P2Y purinoceptor 12 (342 aa).

The Extracellular portion of the chain corresponds to 1–27 (MQAVDNLTSAPGNTSLCTRDYKITQVL). 2 N-linked (GlcNAc...) asparagine glycosylation sites follow: asparagine 6 and asparagine 13. Cystine bridges form between cysteine 17–cysteine 270 and cysteine 97–cysteine 175. A helical membrane pass occupies residues 28 to 50 (FPLLYTVLFFVGLITNGLAMRIF). The Cytoplasmic segment spans residues 51 to 61 (FQIRSKSNFII). Serine 55 and serine 57 each carry phosphoserine. A helical membrane pass occupies residues 62-82 (FLKNTVISDLLMILTFPFKIL). At 83 to 97 (SDAKLGTGPLRTFVC) the chain is on the extracellular side. The ADP site is built by arginine 93, cysteine 97, and tyrosine 105. The chain crosses the membrane as a helical span at residues 98-118 (QVTSVIFYFTMYISISFLGLI). Topologically, residues 119–142 (TIDRYQKTTRPFKTSNPKNLLGAK) are cytoplasmic. Residues 143–162 (ILSVVIWAFMFLLSLPNMIL) traverse the membrane as a helical segment. ADP is bound by residues 156 to 159 (SLPN), 175 to 179 (CSFLK), histidine 187, and asparagine 191. At 163-185 (TNRQPRDKNVKKCSFLKSEFGLV) the chain is on the extracellular side. The helical transmembrane segment at 186 to 207 (WHEIVNYICQVIFWINFLIVIV) threads the bilayer. Over 208-233 (CYTLITKELYRSYVRTRGVGKVPRKK) the chain is Cytoplasmic. Residues 234 to 259 (VNVKVFIIIAVFFICFVPFHFARIPY) traverse the membrane as a helical segment. ADP-binding positions include 256–259 (RIPY), glutamine 263, and lysine 280. Residues 260–278 (TLSQTRDVFDCTAENTLFY) lie on the Extracellular side of the membrane. The helical transmembrane segment at 279–298 (VKESTLWLTSLNACLDPFIY) threads the bilayer. At 299 to 342 (FFLCKSFRNSLISMLKCPNSATSLSQDNRKKEQDGGDPNEETPM) the chain is on the cytoplasmic side. Positions 319 to 342 (ATSLSQDNRKKEQDGGDPNEETPM) are disordered. Positions 333–342 (GGDPNEETPM) are enriched in acidic residues.

Belongs to the G-protein coupled receptor 1 family. As to expression, highly expressed in the platelets, lower levels in the brain. Lowest levels in the lung, appendix, pituitary and adrenal gland. Expressed in the spinal cord and in the fetal brain.

It localises to the cell membrane. In terms of biological role, receptor for ADP and ATP coupled to G-proteins that inhibit the adenylyl cyclase second messenger system. Not activated by UDP and UTP. Required for normal platelet aggregation and blood coagulation. The polypeptide is P2Y purinoceptor 12 (P2RY12) (Homo sapiens (Human)).